The chain runs to 466 residues: ATP synthase subunit beta, sodium ion specific (466 aa).

153–160 (GGAGVGKT) contacts ATP.

The protein belongs to the ATPase alpha/beta chains family. As to quaternary structure, F-type ATPases have 2 components, CF(1) - the catalytic core - and CF(0) - the membrane proton channel. CF(1) has five subunits: alpha(3), beta(3), gamma(1), delta(1), epsilon(1). CF(0) has three main subunits: a, b and c.

It localises to the cell membrane. The catalysed reaction is 4 Na(+)(in) + ATP + H2O = 4 Na(+)(out) + ADP + phosphate + H(+). With respect to regulation, inhibited by nitrate. Its function is as follows. Produces ATP from ADP in the presence of a sodium ion gradient across the membrane. The beta chain is the catalytic subunit. This Acetobacterium woodii (strain ATCC 29683 / DSM 1030 / JCM 2381 / KCTC 1655 / WB1) protein is ATP synthase subunit beta, sodium ion specific.